Consider the following 127-residue polypeptide: Mitochondrial pyruvate carrier 2 (127 aa).

Topologically, residues alanine 2 to threonine 40 are mitochondrial matrix. The residue at position 26 (lysine 26) is an N6-acetyllysine. A helical transmembrane segment spans residues valine 41–alanine 61. Residues arginine 62 to serine 72 are Mitochondrial intermembrane-facing. The helical transmembrane segment at threonine 73–isoleucine 90 threads the bilayer. At proline 91–lysine 92 the chain is on the mitochondrial matrix side. The helical transmembrane segment at asparagine 93–tryptophan 115 threads the bilayer. Residues arginine 116–glutamine 127 lie on the Mitochondrial intermembrane side of the membrane.

This sequence belongs to the mitochondrial pyruvate carrier (MPC) (TC 2.A.105) family. In terms of assembly, homodimer. Homooligomer. Forms heterodimers with MPC1 and MPC1L. The heterodimer is the more stable and dominant form.

It localises to the mitochondrion inner membrane. The enzyme catalyses pyruvate(out) + H(+)(out) = pyruvate(in) + H(+)(in). Mediates the uptake of pyruvate into mitochondria. The polypeptide is Mitochondrial pyruvate carrier 2 (Mpc2) (Mus musculus (Mouse)).